The sequence spans 404 residues: MKLPIYLDYAATTPVDPRVAEKMFQYMTMDGIFGNPASRSHRYGWQAEEAVDIARNQVADLINADHREIVFTSGATESNNLAIKGVAHFYNKKGKHIITSKTEHKAVLDTCRQLEREGFEVTYLEPASNGIIPMERLEAAMRDDTILVSIMHVNNEIGVIHDIDAIGELCRSKGIIFHMDAAQSAGKLPIDVQATKVDLISISGHKMYGPKGIGALYVRRKPRIRLEAQMHGGGHERGMRSGTLPTHQIVGLGEAAAIAKAEMATDNERIGRLRDKLWNGIKHIEETYINGDLTQRFCGSLNVSFNYVEGESLMMALKDLAVSSGSACTSASLEPSYVLRALGLNDEMAHSSIRFSIGRFTTEEEIDHAIETITQSIDKLREMSPLWEMFKDGIDLNQVQWAHH.

Residues 75 to 76 (AT), Asn-155, Gln-183, and 203 to 205 (SGH) each bind pyridoxal 5'-phosphate. At Lys-206 the chain carries N6-(pyridoxal phosphate)lysine. Pyridoxal 5'-phosphate is bound at residue Thr-243. Cys-328 serves as the catalytic Cysteine persulfide intermediate. Position 328 (Cys-328) interacts with [2Fe-2S] cluster.

It belongs to the class-V pyridoxal-phosphate-dependent aminotransferase family. NifS/IscS subfamily. As to quaternary structure, homodimer. Forms a heterotetramer with IscU, interacts with other sulfur acceptors. Pyridoxal 5'-phosphate serves as cofactor.

It is found in the cytoplasm. It catalyses the reaction (sulfur carrier)-H + L-cysteine = (sulfur carrier)-SH + L-alanine. Its pathway is cofactor biosynthesis; iron-sulfur cluster biosynthesis. In terms of biological role, master enzyme that delivers sulfur to a number of partners involved in Fe-S cluster assembly, tRNA modification or cofactor biosynthesis. Catalyzes the removal of elemental sulfur atoms from cysteine to produce alanine. Functions as a sulfur delivery protein for Fe-S cluster synthesis onto IscU, an Fe-S scaffold assembly protein, as well as other S acceptor proteins. This chain is Cysteine desulfurase IscS, found in Shewanella putrefaciens (strain CN-32 / ATCC BAA-453).